Here is a 126-residue protein sequence, read N- to C-terminus: Histone H2B type 1-O (126 aa).

Residues 1 to 12 (MPDPAKSAPAPK) show a composition bias toward low complexity. Residues 1–35 (MPDPAKSAPAPKKGSKKAVTKAQKKDGKKRKRSRK) are disordered. Pro2 is subject to N-acetylproline; partial. At Lys6 the chain carries N6-(2-hydroxyisobutyryl)lysine; alternate. Lys6 bears the N6-(beta-hydroxybutyryl)lysine; alternate mark. Lys6 carries the post-translational modification N6-acetyllysine; alternate. Lys6 is subject to N6-butyryllysine; alternate. The residue at position 6 (Lys6) is an N6-crotonyllysine; alternate. At Lys6 the chain carries N6-lactoyllysine; alternate. Lys6 participates in a covalent cross-link: Glycyl lysine isopeptide (Lys-Gly) (interchain with G-Cter in SUMO2); alternate. Ser7 carries the ADP-ribosylserine modification. Lys12 carries the post-translational modification N6-(beta-hydroxybutyryl)lysine; alternate. Residues Lys12 and Lys13 each carry the N6-acetyllysine; alternate modification. N6-crotonyllysine; alternate occurs at positions 12 and 13. Lys12 is subject to N6-lactoyllysine; alternate. Position 13 is an N6-(2-hydroxyisobutyryl)lysine; alternate (Lys13). Residue Ser15 is modified to Phosphoserine; by STK4/MST1. N6-acetyllysine; alternate is present on residues Lys16, Lys17, Lys21, and Lys24. N6-crotonyllysine; alternate occurs at positions 16, 17, 21, and 24. Lys16, Lys17, Lys21, and Lys24 each carry N6-lactoyllysine; alternate. N6-(beta-hydroxybutyryl)lysine; alternate occurs at positions 17 and 21. N6-glutaryllysine; alternate is present on Lys17. Residues Lys21 and Lys24 each carry the N6-(2-hydroxyisobutyryl)lysine; alternate modification. At Lys21 the chain carries N6-butyryllysine; alternate. A Glycyl lysine isopeptide (Lys-Gly) (interchain with G-Cter in SUMO2); alternate cross-link involves residue Lys21. Position 25 is an N6-(2-hydroxyisobutyryl)lysine (Lys25). The residue at position 35 (Lys35) is an N6-(2-hydroxyisobutyryl)lysine; alternate. Lys35 bears the N6-(beta-hydroxybutyryl)lysine; alternate mark. Lys35 is modified (N6-crotonyllysine; alternate). At Lys35 the chain carries N6-glutaryllysine; alternate. Lys35 carries the N6-succinyllysine; alternate modification. Residue Lys35 forms a Glycyl lysine isopeptide (Lys-Gly) (interchain with G-Cter in ubiquitin); alternate linkage. Glu36 carries the post-translational modification PolyADP-ribosyl glutamic acid. Residue Ser37 is modified to Phosphoserine; by AMPK. N6-(2-hydroxyisobutyryl)lysine; alternate is present on residues Lys44, Lys47, and Lys58. Lys44 carries the post-translational modification N6-lactoyllysine; alternate. An N6-glutaryllysine; alternate mark is found at Lys44 and Lys47. Residue Lys47 is modified to N6-methyllysine; alternate. Lys58 carries the N6,N6-dimethyllysine; alternate modification. Arg80 is modified (dimethylated arginine). Residue Lys86 is modified to N6-(2-hydroxyisobutyryl)lysine; alternate. The residue at position 86 (Lys86) is an N6-(beta-hydroxybutyryl)lysine; alternate. Lys86 carries the N6-acetyllysine; alternate modification. An N6-lactoyllysine; alternate modification is found at Lys86. Lys86 is subject to N6,N6,N6-trimethyllysine; alternate. Omega-N-methylarginine occurs at positions 87 and 93. Residue Lys109 is modified to N6-(2-hydroxyisobutyryl)lysine; alternate. Lys109 bears the N6-lactoyllysine; alternate mark. Residue Lys109 is modified to N6-glutaryllysine; alternate. N6-methyllysine; alternate is present on Lys109. Residue Ser113 is glycosylated (O-linked (GlcNAc) serine). The residue at position 116 (Thr116) is a Phosphothreonine. 2 positions are modified to N6-(2-hydroxyisobutyryl)lysine; alternate: Lys117 and Lys121. Lys117 and Lys121 each carry N6-(beta-hydroxybutyryl)lysine; alternate. N6-lactoyllysine; alternate occurs at positions 117 and 121. Lys117 and Lys121 each carry N6-glutaryllysine; alternate. An N6-succinyllysine; alternate mark is found at Lys117 and Lys121. Lys117 is subject to N6-malonyllysine; alternate. An N6-methylated lysine; alternate modification is found at Lys117. Lys121 is covalently cross-linked (Glycyl lysine isopeptide (Lys-Gly) (interchain with G-Cter in ubiquitin); alternate).

This sequence belongs to the histone H2B family. The nucleosome is a histone octamer containing two molecules each of H2A, H2B, H3 and H4 assembled in one H3-H4 heterotetramer and two H2A-H2B heterodimers. The octamer wraps approximately 147 bp of DNA. In terms of processing, monoubiquitination at Lys-35 (H2BK34Ub) by the MSL1/MSL2 dimer is required for histone H3 'Lys-4' (H3K4me) and 'Lys-79' (H3K79me) methylation and transcription activation at specific gene loci, such as HOXA9 and MEIS1 loci. Similarly, monoubiquitination at Lys-121 (H2BK120Ub) by the RNF20/40 complex gives a specific tag for epigenetic transcriptional activation and is also prerequisite for histone H3 'Lys-4' and 'Lys-79' methylation. It also functions cooperatively with the FACT dimer to stimulate elongation by RNA polymerase II. H2BK120Ub also acts as a regulator of mRNA splicing: deubiquitination by USP49 is required for efficient cotranscriptional splicing of a large set of exons. Phosphorylation at Ser-37 (H2BS36ph) by AMPK in response to stress promotes transcription. Phosphorylated on Ser-15 (H2BS14ph) by STK4/MST1 during apoptosis; which facilitates apoptotic chromatin condensation. Also phosphorylated on Ser-15 in response to DNA double strand breaks (DSBs), and in correlation with somatic hypermutation and immunoglobulin class-switch recombination. Post-translationally, glcNAcylation at Ser-113 promotes monoubiquitination of Lys-121. It fluctuates in response to extracellular glucose, and associates with transcribed genes. In terms of processing, ADP-ribosylated by PARP1 or PARP2 on Ser-7 (H2BS6ADPr) in response to DNA damage. H2BS6ADPr promotes recruitment of CHD1L. Poly ADP-ribosylation on Glu-36 (H2BE35ADPr) by PARP1 regulates adipogenesis: it inhibits phosphorylation at Ser-37 (H2BS36ph), thereby blocking expression of pro-adipogenetic genes. Crotonylation (Kcr) is specifically present in male germ cells and marks testis-specific genes in post-meiotic cells, including X-linked genes that escape sex chromosome inactivation in haploid cells. Crotonylation marks active promoters and enhancers and confers resistance to transcriptional repressors. It is also associated with post-meiotically activated genes on autosomes. Post-translationally, lactylated in macrophages by EP300/P300 by using lactoyl-CoA directly derived from endogenous or exogenous lactate, leading to stimulates gene transcription.

The protein resides in the nucleus. Its subcellular location is the chromosome. In terms of biological role, core component of nucleosome. Nucleosomes wrap and compact DNA into chromatin, limiting DNA accessibility to the cellular machineries which require DNA as a template. Histones thereby play a central role in transcription regulation, DNA repair, DNA replication and chromosomal stability. DNA accessibility is regulated via a complex set of post-translational modifications of histones, also called histone code, and nucleosome remodeling. This Homo sapiens (Human) protein is Histone H2B type 1-O.